The chain runs to 600 residues: Elongation factor 4 (600 aa).

The 183-residue stretch at 4 to 186 (DTIRNFSIIA…EIVKKIPPPE (183 aa)) folds into the tr-type G domain. Residues 16–21 (DHGKST) and 133–136 (NKID) contribute to the GTP site.

The protein belongs to the TRAFAC class translation factor GTPase superfamily. Classic translation factor GTPase family. LepA subfamily.

Its subcellular location is the cell inner membrane. The enzyme catalyses GTP + H2O = GDP + phosphate + H(+). In terms of biological role, required for accurate and efficient protein synthesis under certain stress conditions. May act as a fidelity factor of the translation reaction, by catalyzing a one-codon backward translocation of tRNAs on improperly translocated ribosomes. Back-translocation proceeds from a post-translocation (POST) complex to a pre-translocation (PRE) complex, thus giving elongation factor G a second chance to translocate the tRNAs correctly. Binds to ribosomes in a GTP-dependent manner. This Geobacter sulfurreducens (strain ATCC 51573 / DSM 12127 / PCA) protein is Elongation factor 4.